The primary structure comprises 415 residues: Mitogen-activated protein kinase mpkC (415 aa).

A Protein kinase domain is found at 20–299; that stretch reads YANLQPVGLG…AEQGLMHPWM (280 aa). Residues 26 to 34 and lysine 49 each bind ATP; that span reads VGLGTAGVV. The active-site Proton acceptor is aspartate 141. Threonine 171 is subject to Phosphothreonine. The short motif at 171–173 is the TXY element; sequence TGY. Residue tyrosine 173 is modified to Phosphotyrosine.

Belongs to the protein kinase superfamily. Ser/Thr protein kinase family. MAP kinase subfamily. HOG1 sub-subfamily. The cofactor is Mg(2+). Dually phosphorylated on Thr-171 and Tyr-173, which activates the enzyme.

The catalysed reaction is L-seryl-[protein] + ATP = O-phospho-L-seryl-[protein] + ADP + H(+). The enzyme catalyses L-threonyl-[protein] + ATP = O-phospho-L-threonyl-[protein] + ADP + H(+). Activated by tyrosine and threonine phosphorylation. Mitogen-activated protein kinase required for growth on media where sorbitol or mannitol is the sole carbon source. The chain is Mitogen-activated protein kinase mpkC (mpkC) from Emericella nidulans (strain FGSC A4 / ATCC 38163 / CBS 112.46 / NRRL 194 / M139) (Aspergillus nidulans).